Here is a 193-residue protein sequence, read N- to C-terminus: Acyl carrier protein phosphodiesterase (193 aa).

Belongs to the AcpH family.

It catalyses the reaction holo-[ACP] + H2O = apo-[ACP] + (R)-4'-phosphopantetheine + H(+). In terms of biological role, converts holo-ACP to apo-ACP by hydrolytic cleavage of the phosphopantetheine prosthetic group from ACP. The sequence is that of Acyl carrier protein phosphodiesterase from Salmonella newport (strain SL254).